Consider the following 243-residue polypeptide: Uridine-cytidine kinase B (243 aa).

ATP is bound at residue 22–29 (GGTASGKT).

This sequence belongs to the uridine kinase family.

It catalyses the reaction uridine + ATP = UMP + ADP + H(+). It carries out the reaction cytidine + ATP = CMP + ADP + H(+). The protein operates within pyrimidine metabolism; CTP biosynthesis via salvage pathway; CTP from cytidine: step 1/3. It participates in pyrimidine metabolism; UMP biosynthesis via salvage pathway; UMP from uridine: step 1/1. Catalyzes the conversion of uridine into uridine monophosphate and cytidine into cytidine monophosphate in the pyrimidine salvage pathway. The sequence is that of Uridine-cytidine kinase B (udkB) from Dictyostelium discoideum (Social amoeba).